Reading from the N-terminus, the 412-residue chain is Putative pectate lyase 11 (412 aa).

Residues 1–24 (MVSYSNNHFAYAFLLLLTIGNTLA) form the signal peptide. The Ca(2+) site is built by D210, D234, and D238. R290 is a catalytic residue.

It belongs to the polysaccharide lyase 1 family. Requires Ca(2+) as cofactor.

It catalyses the reaction Eliminative cleavage of (1-&gt;4)-alpha-D-galacturonan to give oligosaccharides with 4-deoxy-alpha-D-galact-4-enuronosyl groups at their non-reducing ends.. The protein operates within glycan metabolism; pectin degradation; 2-dehydro-3-deoxy-D-gluconate from pectin: step 2/5. The polypeptide is Putative pectate lyase 11 (Arabidopsis thaliana (Mouse-ear cress)).